The following is a 286-amino-acid chain: Prohibitin-6, mitochondrial (286 aa).

Topologically, residues 1 to 12 (MNFKNVKVPKGP) are mitochondrial matrix. The helical; Signal-anchor for type II membrane protein transmembrane segment at 13 to 35 (GGGVIAAVVIGGLSLYGATHTLY) threads the bilayer. At 36–286 (NVDGGHRAIV…AMDLDVKPKK (251 aa)) the chain is on the mitochondrial intermembrane side.

Belongs to the prohibitin family. Component of a prohibitin multimeric complex in mitochondrial membranes. Mostly expressed in proliferative tissues, including vasculature, shoot and root apical tissues.

It localises to the mitochondrion inner membrane. Prohibitin probably acts as a holdase/unfoldase for the stabilization of newly synthesized mitochondrial proteins. The polypeptide is Prohibitin-6, mitochondrial (PHB6) (Arabidopsis thaliana (Mouse-ear cress)).